Here is a 67-residue protein sequence, read N- to C-terminus: Conotoxin Cal6.35 (67 aa).

The N-terminal stretch at M1–A22 is a signal peptide. 3 disulfide bridges follow: C43/C53, C46/C59, and C52/C66.

Belongs to the conotoxin O1 superfamily. In terms of tissue distribution, expressed by the venom duct.

The protein resides in the secreted. Probable neurotoxin. The polypeptide is Conotoxin Cal6.35 (Californiconus californicus (California cone)).